The sequence spans 328 residues: Acetyl-coenzyme A carboxylase carboxyl transferase subunit alpha (328 aa).

Positions 42 to 296 constitute a CoA carboxyltransferase C-terminal domain; sequence SFKEQLSILK…KESLISELHF (255 aa).

Belongs to the AccA family. In terms of assembly, acetyl-CoA carboxylase is a heterohexamer composed of biotin carboxyl carrier protein (accB), biotin carboxylase (accC) and two subunits each of ACCase subunit alpha (accA) and ACCase subunit beta (accD).

It localises to the plastid. Its subcellular location is the chloroplast. The enzyme catalyses N(6)-carboxybiotinyl-L-lysyl-[protein] + acetyl-CoA = N(6)-biotinyl-L-lysyl-[protein] + malonyl-CoA. The protein operates within lipid metabolism; malonyl-CoA biosynthesis; malonyl-CoA from acetyl-CoA: step 1/1. Its function is as follows. Component of the acetyl coenzyme A carboxylase (ACC) complex. First, biotin carboxylase catalyzes the carboxylation of biotin on its carrier protein (BCCP) and then the CO(2) group is transferred by the carboxyltransferase to acetyl-CoA to form malonyl-CoA. The polypeptide is Acetyl-coenzyme A carboxylase carboxyl transferase subunit alpha (Gracilaria tenuistipitata var. liui (Red alga)).